A 132-amino-acid polypeptide reads, in one-letter code: NADPH-dependent 7-cyano-7-deazaguanine reductase (132 aa).

Cys48 (thioimide intermediate) is an active-site residue. Asp55 functions as the Proton donor in the catalytic mechanism. Residues 70–72 (LEL) and 89–90 (ME) contribute to the substrate site.

The protein belongs to the GTP cyclohydrolase I family. QueF type 1 subfamily.

The protein localises to the cytoplasm. The enzyme catalyses 7-aminomethyl-7-carbaguanine + 2 NADP(+) = 7-cyano-7-deazaguanine + 2 NADPH + 3 H(+). Its pathway is tRNA modification; tRNA-queuosine biosynthesis. Functionally, catalyzes the NADPH-dependent reduction of 7-cyano-7-deazaguanine (preQ0) to 7-aminomethyl-7-deazaguanine (preQ1). In Elusimicrobium minutum (strain Pei191), this protein is NADPH-dependent 7-cyano-7-deazaguanine reductase.